The chain runs to 32 residues: Cytochrome b6-f complex subunit 7 (32 aa).

The helical transmembrane segment at 5-25 (IFGTAAIFWVLIPIGLVGGAL) threads the bilayer.

This sequence belongs to the PetM family. In terms of assembly, the 4 large subunits of the cytochrome b6-f complex are cytochrome b6, subunit IV (17 kDa polypeptide, PetD), cytochrome f and the Rieske protein, while the 4 small subunits are PetG, PetL, PetM and PetN. The complex functions as a dimer.

It is found in the cellular thylakoid membrane. Functionally, component of the cytochrome b6-f complex, which mediates electron transfer between photosystem II (PSII) and photosystem I (PSI), cyclic electron flow around PSI, and state transitions. The chain is Cytochrome b6-f complex subunit 7 from Synechococcus sp. (strain CC9902).